Reading from the N-terminus, the 443-residue chain is Methyl-coenzyme M reductase subunit beta (443 aa).

Y367 is a coenzyme M binding site. G369 is a binding site for coenzyme B.

Belongs to the methyl-coenzyme M reductase beta subunit family. MCR is a hexamer of two alpha, two beta, and two gamma chains, forming a dimer of heterotrimers. The cofactor is coenzyme F430.

The protein localises to the cytoplasm. It carries out the reaction coenzyme B + methyl-coenzyme M = methane + coenzyme M-coenzyme B heterodisulfide. It functions in the pathway one-carbon metabolism; methyl-coenzyme M reduction; methane from methyl-coenzyme M: step 1/1. Functionally, component of the methyl-coenzyme M reductase (MCR) I that catalyzes the reductive cleavage of methyl-coenzyme M (CoM-S-CH3 or 2-(methylthio)ethanesulfonate) using coenzyme B (CoB or 7-mercaptoheptanoylthreonine phosphate) as reductant which results in the production of methane and the mixed heterodisulfide of CoB and CoM (CoM-S-S-CoB). This is the final step in methanogenesis. This chain is Methyl-coenzyme M reductase subunit beta (mcrB), found in Methanococcus voltae.